The chain runs to 98 residues: Large ribosomal subunit protein uL23 (98 aa).

It belongs to the universal ribosomal protein uL23 family. In terms of assembly, part of the 50S ribosomal subunit. Contacts protein L29, and trigger factor when it is bound to the ribosome.

Functionally, one of the early assembly proteins it binds 23S rRNA. One of the proteins that surrounds the polypeptide exit tunnel on the outside of the ribosome. Forms the main docking site for trigger factor binding to the ribosome. This Cellvibrio japonicus (strain Ueda107) (Pseudomonas fluorescens subsp. cellulosa) protein is Large ribosomal subunit protein uL23.